We begin with the raw amino-acid sequence, 360 residues long: 3-dehydroquinate synthase (360 aa).

Residues 105–109 (GVVGD), 129–130 (TT), Lys142, Lys151, and 169–172 (TLKT) each bind NAD(+). Residues Glu184, His247, and His263 each coordinate Zn(2+).

It belongs to the sugar phosphate cyclases superfamily. Dehydroquinate synthase family. It depends on Co(2+) as a cofactor. Zn(2+) serves as cofactor. NAD(+) is required as a cofactor.

It is found in the cytoplasm. The enzyme catalyses 7-phospho-2-dehydro-3-deoxy-D-arabino-heptonate = 3-dehydroquinate + phosphate. Its pathway is metabolic intermediate biosynthesis; chorismate biosynthesis; chorismate from D-erythrose 4-phosphate and phosphoenolpyruvate: step 2/7. Functionally, catalyzes the conversion of 3-deoxy-D-arabino-heptulosonate 7-phosphate (DAHP) to dehydroquinate (DHQ). The sequence is that of 3-dehydroquinate synthase from Acetivibrio thermocellus (strain ATCC 27405 / DSM 1237 / JCM 9322 / NBRC 103400 / NCIMB 10682 / NRRL B-4536 / VPI 7372) (Clostridium thermocellum).